A 418-amino-acid chain; its full sequence is Tryptophan synthase beta chain 1 (418 aa).

An N6-(pyridoxal phosphate)lysine modification is found at lysine 99.

The protein belongs to the TrpB family. In terms of assembly, tetramer of two alpha and two beta chains. Pyridoxal 5'-phosphate is required as a cofactor.

The catalysed reaction is (1S,2R)-1-C-(indol-3-yl)glycerol 3-phosphate + L-serine = D-glyceraldehyde 3-phosphate + L-tryptophan + H2O. It functions in the pathway amino-acid biosynthesis; L-tryptophan biosynthesis; L-tryptophan from chorismate: step 5/5. Functionally, the beta subunit is responsible for the synthesis of L-tryptophan from indole and L-serine. The polypeptide is Tryptophan synthase beta chain 1 (trpB1) (Corynebacterium efficiens (strain DSM 44549 / YS-314 / AJ 12310 / JCM 11189 / NBRC 100395)).